The chain runs to 131 residues: MSWQAYVDDHLCCEIDGQHLTSAAILGHDGSVWAESPNFPKFKPEEIAGIVKDFEEPGHLAPTGLFLGGTKYMVIQGEPGVVIRGKKGTGGITIKKTGMALILGIYDEPMTPGQCNLVVERLGDYLIDQGY.

It belongs to the profilin family. In terms of assembly, occurs in many kinds of cells as a complex with monomeric actin in a 1:1 ratio.

It is found in the cytoplasm. Its subcellular location is the cytoskeleton. Binds to actin and affects the structure of the cytoskeleton. At high concentrations, profilin prevents the polymerization of actin, whereas it enhances it at low concentrations. By binding to PIP2, it inhibits the formation of IP3 and DG. The sequence is that of Profilin-2 (PRO2) from Triticum aestivum (Wheat).